The primary structure comprises 274 residues: HTH-type transcriptional regulator GadX (274 aa).

Residues T145–R242 form the HTH araC/xylS-type domain. 2 DNA-binding regions (H-T-H motif) span residues A162–G183 and I209–Y232.

In terms of assembly, homodimer.

Its function is as follows. Positively regulates the expression of about fifteen genes involved in acid resistance such as gadA, gadB and gadC. Depending on the conditions (growth phase and medium), can repress gadW. In Escherichia coli O6:H1 (strain CFT073 / ATCC 700928 / UPEC), this protein is HTH-type transcriptional regulator GadX (gadX).